Reading from the N-terminus, the 125-residue chain is Large ribosomal subunit protein bL19 (125 aa).

This sequence belongs to the bacterial ribosomal protein bL19 family.

In terms of biological role, this protein is located at the 30S-50S ribosomal subunit interface and may play a role in the structure and function of the aminoacyl-tRNA binding site. This Wolbachia pipientis subsp. Culex pipiens (strain wPip) protein is Large ribosomal subunit protein bL19.